Consider the following 122-residue polypeptide: MAPKKDKKPKKSTWKFNLDLTHAVEDGIFDSGNFEQFLREKVKVNGKTGNLGNVVHIERFKNKIIVVSEKQFSKRYLKYLTKKYLKKNNLRDWLRVVASDKETYELRYFQISQDEDESESED.

A phosphoserine mark is found at serine 112, serine 118, and serine 120.

It belongs to the eukaryotic ribosomal protein eL22 family.

This chain is Ribosomal protein eL22-like (RPL22L1), found in Bos taurus (Bovine).